A 1087-amino-acid chain; its full sequence is Gelsolin-related protein of 125 kDa (1087 aa).

The tract at residues 1–40 (MEEDNIVDSKEIENNVEDKKEETPSSSPSPSSSLQQQQEE) is disordered. Residues 7–23 (VDSKEIENNVEDKKEET) show a composition bias toward basic and acidic residues. Over residues 24–40 (PSSSPSPSSSLQQQQEE) the composition is skewed to low complexity. Gelsolin-like repeat units lie at residues 73–146 (PFHF…PTFL), 183–286 (FLFK…FSKW), 335–442 (GKLL…FGTE), and 465–538 (TQLF…DNFW). Residues 550–598 (INTFINENKEEKEKEEEEKEEEEEEEEEEEEEEEEEKDNNKTTTIIKHL) adopt a coiled-coil conformation. Residues 555–592 (NENKEEKEKEEEEKEEEEEEEEEEEEEEEEEKDNNKTT) are disordered. Acidic residues predominate over residues 562-586 (EKEEEEKEEEEEEEEEEEEEEEEEK). The Gelsolin-like 5 repeat unit spans residues 614–692 (IFKADQINPF…EQYNESPLFK (79 aa)). Residues 710 to 912 (IISYKQKLAE…ETVNEENEVG (203 aa)) adopt a coiled-coil conformation. Composition is skewed to basic and acidic residues over residues 732-770 (KQQQEQEQEQQQKENNKIVEEVKEEVKEEDVKEEVKEEE), 779-808 (EEVKEVAKEETKEEIKEEVNDEATEVKEVN), 817-840 (EEVKEEVKVEVKEEEVKGEAKEEE), and 849-900 (EEVK…KVNE). The disordered stretch occupies residues 732–1087 (KQQQEQEQEQ…HNRSSSLTHA (356 aa)). Over residues 901–910 (ENETVNEENE) the composition is skewed to acidic residues. 2 stretches are compositionally biased toward polar residues: residues 925–939 (ANSSSTISSPENEGS) and 950–961 (EPITPSVVSSSG). Residues 983–1002 (QGRKGGRKSHGKNQPQHKKN) are compositionally biased toward basic residues. Positions 1018 to 1040 (KSLNLDIDNQSFDLNSINNNNSV) are enriched in polar residues. Over residues 1047-1065 (SSPLSFSSSSINSNSTHNT) the composition is skewed to low complexity. Residues 1066–1080 (PSKKNKNKNKKKHNR) show a composition bias toward basic residues.

It belongs to the villin/gelsolin family. In terms of assembly, interacts with rasD and abpC.

It is found in the cytoplasmic vesicle. Functionally, involved in phototaxis. Required for coupling photodetection to the locomotory machinery of slugs. May be essential in the natural environment for the propagation of spores. The chain is Gelsolin-related protein of 125 kDa (gnrA) from Dictyostelium discoideum (Social amoeba).